The following is a 116-amino-acid chain: Nucleoid-associated protein A9601_00191 (116 aa).

Belongs to the YbaB/EbfC family. In terms of assembly, homodimer.

The protein resides in the cytoplasm. The protein localises to the nucleoid. Its function is as follows. Binds to DNA and alters its conformation. May be involved in regulation of gene expression, nucleoid organization and DNA protection. The chain is Nucleoid-associated protein A9601_00191 from Prochlorococcus marinus (strain AS9601).